A 538-amino-acid chain; its full sequence is MRHVQAEPSPSSEPEAGPSQPPVRQGALQGGLLMGYSPAGGATSPGVYQVSIFSPPAGTSEPHRALKRQAPPTEGPRELKRGPGLGAREGLPPEEPSTVGLLGPEGLGLGLGVASQHFSHRGLCVVEQRSSVTSSWTSGTWSPPCPPSNASCNTLHTRDWASPDPGGHGSLGESPGPAPPGQLHTLDTDLHSLAQIGGKSPVAGVGNGGSLWPRESPGTANGHSPEHTPPGPGPPGPCPTKRRLLPAGEAPDVSSEEEGPAPRRRRGSLGHPTAANSSDAKATSFWSHLLPGPKEPVLDPTDCSPMGRRLKGARRLKLSPLRSLRKGPGLLSPPSASPVPTPAVSRTLLGNFEESLLRGRFAPSGHIEGFTAEIGASGSYCPQHVTLPVTVTFFDVSEQNAPAPFLGIVDLNPLGRKGYSVPKVGTVQVTLFNPNQTVVKMFLVTFDFSDMPAAHMTFLRHRLFLVPVGEEGNANPTHRLLCYLLHLRFRSSRSGRLSLHGDIRLLFSRRSLELDTGLPYELQAVTEAPHNPRYSPLP.

Residues 1–18 (MRHVQAEPSPSSEPEAGP) show a composition bias toward low complexity. 3 disordered regions span residues 1 to 103 (MRHV…GLLG), 156 to 185 (HTRD…QLHT), and 197 to 308 (GGKS…PMGR). The span at 227-238 (HTPPGPGPPGPC) shows a compositional bias: pro residues. Residues S254 and S255 each carry the phosphoserine modification. Residues 274 to 286 (AANSSDAKATSFW) show a composition bias toward polar residues. The interval 348-430 (LLGNFEESLL…VPKVGTVQVT (83 aa)) is required for macropage invasion. The segment at 436–444 (QTVVKMFLV) is transactivation domain 1 (TAD1).

This sequence belongs to the ATOS family.

The protein resides in the nucleus. Functionally, transcription regulator that may syncronize transcriptional and translational programs. This Macaca fascicularis (Crab-eating macaque) protein is Atos homolog protein B.